Reading from the N-terminus, the 512-residue chain is Apolipoprotein N-acyltransferase (512 aa).

The next 6 membrane-spanning stretches (helical) occupy residues 5-25, 56-76, 92-112, 118-138, 168-188, and 195-215; these read LDKY…FAAA, FAVS…FYWI, VPLT…CFWL, LPRG…TEFA, FGGI…LVLA, and SGKR…GYTA. Positions 233–477 constitute a CN hydrolase domain; that stretch reads LQGNIDQTLK…ETVLEGHIKG (245 aa). The active-site Proton acceptor is Glu271. Lys337 is an active-site residue. Catalysis depends on Cys389, which acts as the Nucleophile. The helical transmembrane segment at 487-507 threads the bilayer; the sequence is TGSSWWLMGILTLAALILFIF.

This sequence belongs to the CN hydrolase family. Apolipoprotein N-acyltransferase subfamily.

It localises to the cell inner membrane. It catalyses the reaction N-terminal S-1,2-diacyl-sn-glyceryl-L-cysteinyl-[lipoprotein] + a glycerophospholipid = N-acyl-S-1,2-diacyl-sn-glyceryl-L-cysteinyl-[lipoprotein] + a 2-acyl-sn-glycero-3-phospholipid + H(+). The protein operates within protein modification; lipoprotein biosynthesis (N-acyl transfer). Its function is as follows. Catalyzes the phospholipid dependent N-acylation of the N-terminal cysteine of apolipoprotein, the last step in lipoprotein maturation. This Neisseria meningitidis serogroup A / serotype 4A (strain DSM 15465 / Z2491) protein is Apolipoprotein N-acyltransferase.